The chain runs to 356 residues: MKSKHRFIQACFRQPVDRTPIWLMRQAGRYLPEYRKTRAQAGDFMALCKNTELATEVTMQPIRRYGLDAAILFSDILVIPEAMGMDVRFATGEGPLLDPPVRVHGDIEKLIHTDPEDSLDYVMRAVASIRKALNEEIPLIGFSGSPWTLATYMVEGGSSKTFGLVKGMLYDAPESMHLLLDKLADMVAAYLNAQIRHGAQAVQIFDTWGGVLSQPTFREFSLRSMKAVVDRLDRTNSAGERIPVILFAKGCNAMVEDIAQSGCDVVGLDWTSEIGPLRERIGHKVALQGNMDPALLYASPERIAQGAREVLQAFGPHPGHIFNLGHGMAPDMSPDHVEALVRAVKEEGLKIHQGVA.

Substrate contacts are provided by residues 25–29 (RQAGR), Asp75, Tyr152, Thr207, and His326.

This sequence belongs to the uroporphyrinogen decarboxylase family. Homodimer.

The protein localises to the cytoplasm. The enzyme catalyses uroporphyrinogen III + 4 H(+) = coproporphyrinogen III + 4 CO2. It functions in the pathway porphyrin-containing compound metabolism; protoporphyrin-IX biosynthesis; coproporphyrinogen-III from 5-aminolevulinate: step 4/4. Functionally, catalyzes the decarboxylation of four acetate groups of uroporphyrinogen-III to yield coproporphyrinogen-III. This Magnetococcus marinus (strain ATCC BAA-1437 / JCM 17883 / MC-1) protein is Uroporphyrinogen decarboxylase.